We begin with the raw amino-acid sequence, 141 residues long: Large ribosomal subunit protein uL11 (141 aa).

This sequence belongs to the universal ribosomal protein uL11 family. In terms of assembly, part of the ribosomal stalk of the 50S ribosomal subunit. Interacts with L10 and the large rRNA to form the base of the stalk. L10 forms an elongated spine to which L12 dimers bind in a sequential fashion forming a multimeric L10(L12)X complex. One or more lysine residues are methylated.

Forms part of the ribosomal stalk which helps the ribosome interact with GTP-bound translation factors. This Lacticaseibacillus casei (strain BL23) (Lactobacillus casei) protein is Large ribosomal subunit protein uL11.